A 348-amino-acid polypeptide reads, in one-letter code: GTPase Obg (348 aa).

In terms of domain architecture, Obg spans 1–159; sequence MKFVDEVKVH…RELVLELKLM (159 aa). The OBG-type G domain occupies 160–331; that stretch reads ADVGLVGLPN…LLSALVRILS (172 aa). GTP contacts are provided by residues 166-173, 191-195, 213-216, 283-286, and 312-314; these read GLPNAGKS, FTTLI, DIPG, NKVD, and SAR. The Mg(2+) site is built by S173 and T193.

The protein belongs to the TRAFAC class OBG-HflX-like GTPase superfamily. OBG GTPase family. In terms of assembly, monomer. The cofactor is Mg(2+).

Its subcellular location is the cytoplasm. Its function is as follows. An essential GTPase which binds GTP, GDP and possibly (p)ppGpp with moderate affinity, with high nucleotide exchange rates and a fairly low GTP hydrolysis rate. Plays a role in control of the cell cycle, stress response, ribosome biogenesis and in those bacteria that undergo differentiation, in morphogenesis control. The protein is GTPase Obg of Syntrophobacter fumaroxidans (strain DSM 10017 / MPOB).